The primary structure comprises 387 residues: Protein disulfide isomerase pTAC5, chloroplastic (387 aa).

A chloroplast-targeting transit peptide spans 1-40 (MASSSLPLSLPFPLRSLTSTTRSLPFQCSPLFFSIPSSIV). 2 coiled-coil regions span residues 72-106 (EQRW…LGNS) and 143-163 (REQI…AEEK). The segment at 318–387 (PVDRSESTNT…CDVCDGKKNL (70 aa)) adopts a CR-type zinc-finger fold.

As to quaternary structure, interacts with HSP21; the formed complex associates with the plastid-encoded RNA polymerase (PEP) complex not only during transcription initiation, but also during elongation and termination, and with a stronger efficiency in illuminated chloroplasts. Binds to promoter regions of PEP-dependent genes, especially after a heat stress. Interacts with FLN2.

It is found in the plastid. The protein localises to the chloroplast stroma. Its subcellular location is the chloroplast nucleoid. The enzyme catalyses Catalyzes the rearrangement of -S-S- bonds in proteins.. In terms of biological role, exhibits zinc-dependent disulfide isomerase activity. Required for seedling and chloroplast development under heat stress, probably by maintaining plastid-encoded RNA polymerase (PEP)-dependent transcription. In Arabidopsis thaliana (Mouse-ear cress), this protein is Protein disulfide isomerase pTAC5, chloroplastic.